The sequence spans 259 residues: Sugar fermentation stimulation protein homolog (259 aa).

It belongs to the SfsA family.

This is Sugar fermentation stimulation protein homolog from Chloroflexus aurantiacus (strain ATCC 29364 / DSM 637 / Y-400-fl).